The following is a 714-amino-acid chain: DNA ligase (714 aa).

NAD(+) is bound by residues 47-51 (DAAYD), 96-97 (SL), and Glu-130. Lys-132 serves as the catalytic N6-AMP-lysine intermediate. The NAD(+) site is built by Arg-153, Glu-190, Lys-306, and Lys-330. Zn(2+) is bound by residues Cys-435, Cys-438, Cys-453, and Cys-459. Positions 636 to 714 (RNDSAVAGKT…EDEWLKLIEG (79 aa)) constitute a BRCT domain.

Belongs to the NAD-dependent DNA ligase family. LigA subfamily. Mg(2+) serves as cofactor. Requires Mn(2+) as cofactor.

The enzyme catalyses NAD(+) + (deoxyribonucleotide)n-3'-hydroxyl + 5'-phospho-(deoxyribonucleotide)m = (deoxyribonucleotide)n+m + AMP + beta-nicotinamide D-nucleotide.. In terms of biological role, DNA ligase that catalyzes the formation of phosphodiester linkages between 5'-phosphoryl and 3'-hydroxyl groups in double-stranded DNA using NAD as a coenzyme and as the energy source for the reaction. It is essential for DNA replication and repair of damaged DNA. The polypeptide is DNA ligase (Nitrobacter hamburgensis (strain DSM 10229 / NCIMB 13809 / X14)).